We begin with the raw amino-acid sequence, 248 residues long: 5'-nucleotidase SurE (248 aa).

Positions 8, 9, 39, and 91 each coordinate a divalent metal cation.

The protein belongs to the SurE nucleotidase family. A divalent metal cation is required as a cofactor.

Its subcellular location is the cytoplasm. It catalyses the reaction a ribonucleoside 5'-phosphate + H2O = a ribonucleoside + phosphate. In terms of biological role, nucleotidase that shows phosphatase activity on nucleoside 5'-monophosphates. The sequence is that of 5'-nucleotidase SurE from Geotalea uraniireducens (strain Rf4) (Geobacter uraniireducens).